Consider the following 318-residue polypeptide: tRNA-modifying protein YgfZ (318 aa).

Residues Trp-28 and Trp-182 each coordinate folate.

Belongs to the tRNA-modifying YgfZ family.

The protein localises to the cytoplasm. Folate-binding protein involved in regulating the level of ATP-DnaA and in the modification of some tRNAs. It is probably a key factor in regulatory networks that act via tRNA modification, such as initiation of chromosomal replication. This chain is tRNA-modifying protein YgfZ, found in Aliivibrio fischeri (strain MJ11) (Vibrio fischeri).